We begin with the raw amino-acid sequence, 374 residues long: Chaperone protein DnaJ (374 aa).

The J domain maps to 5 to 70 (DYYEILEIER…GKRQLYDRYG (66 aa)). A CR-type zinc finger spans residues 136–213 (GCKKEIKIRY…CNGKGHENKE (78 aa)). Cys-149, Cys-152, Cys-165, Cys-168, Cys-187, Cys-190, Cys-201, and Cys-204 together coordinate Zn(2+). CXXCXGXG motif repeat units lie at residues 149–156 (CPDCKGTG), 165–172 (CPDCGGRG), 187–194 (CPKCGGSG), and 201–208 (CPKCNGKG).

This sequence belongs to the DnaJ family. In terms of assembly, homodimer. Zn(2+) serves as cofactor.

Its subcellular location is the cytoplasm. Its function is as follows. Participates actively in the response to hyperosmotic and heat shock by preventing the aggregation of stress-denatured proteins and by disaggregating proteins, also in an autonomous, DnaK-independent fashion. Unfolded proteins bind initially to DnaJ; upon interaction with the DnaJ-bound protein, DnaK hydrolyzes its bound ATP, resulting in the formation of a stable complex. GrpE releases ADP from DnaK; ATP binding to DnaK triggers the release of the substrate protein, thus completing the reaction cycle. Several rounds of ATP-dependent interactions between DnaJ, DnaK and GrpE are required for fully efficient folding. Also involved, together with DnaK and GrpE, in the DNA replication of plasmids through activation of initiation proteins. This Wolinella succinogenes (strain ATCC 29543 / DSM 1740 / CCUG 13145 / JCM 31913 / LMG 7466 / NCTC 11488 / FDC 602W) (Vibrio succinogenes) protein is Chaperone protein DnaJ.